A 275-amino-acid polypeptide reads, in one-letter code: 3-methyl-2-oxobutanoate hydroxymethyltransferase (275 aa).

Mg(2+)-binding residues include Asp44 and Asp83. Residues 44–45 (DS), Asp83, and Lys113 contribute to the 3-methyl-2-oxobutanoate site. Glu115 lines the Mg(2+) pocket. Glu182 functions as the Proton acceptor in the catalytic mechanism.

It belongs to the PanB family. As to quaternary structure, homodecamer; pentamer of dimers. It depends on Mg(2+) as a cofactor.

The protein localises to the cytoplasm. The enzyme catalyses 3-methyl-2-oxobutanoate + (6R)-5,10-methylene-5,6,7,8-tetrahydrofolate + H2O = 2-dehydropantoate + (6S)-5,6,7,8-tetrahydrofolate. Its pathway is cofactor biosynthesis; (R)-pantothenate biosynthesis; (R)-pantoate from 3-methyl-2-oxobutanoate: step 1/2. Its function is as follows. Catalyzes the reversible reaction in which hydroxymethyl group from 5,10-methylenetetrahydrofolate is transferred onto alpha-ketoisovalerate to form ketopantoate. The polypeptide is 3-methyl-2-oxobutanoate hydroxymethyltransferase (Clostridium botulinum (strain Loch Maree / Type A3)).